The following is a 196-amino-acid chain: MKILLINGAQEFAHSQGKFNKTLHNVAKDTLIQLGHTVQETVVDEGYDENTEVEKILWANVIIYQWPGWWMGTPWKLKRYMDEVFTAGYGQLYANDGRSSKNPTQNYGKGGLLHEHRYMISCTWNAPAAAFEEVGNFFDGRGVDGTLLTFHKANQFLGMKPLPTFMVNDVIKNPKVDIAVCAYKDHLNDVFGSANA.

FAD contacts are provided by residues 15 to 22 (SQGKFNKT), 68 to 71 (GWWM), Tyr-107, and 123 to 126 (TWNA).

This sequence belongs to the oxidoreductase MdaB family. FAD is required as a cofactor.

This is an uncharacterized protein from Schizosaccharomyces pombe (strain 972 / ATCC 24843) (Fission yeast).